Reading from the N-terminus, the 122-residue chain is Ribosome-binding factor A (122 aa).

This sequence belongs to the RbfA family. As to quaternary structure, monomer. Binds 30S ribosomal subunits, but not 50S ribosomal subunits or 70S ribosomes.

Its subcellular location is the cytoplasm. One of several proteins that assist in the late maturation steps of the functional core of the 30S ribosomal subunit. Associates with free 30S ribosomal subunits (but not with 30S subunits that are part of 70S ribosomes or polysomes). Required for efficient processing of 16S rRNA. May interact with the 5'-terminal helix region of 16S rRNA. The polypeptide is Ribosome-binding factor A (Polaromonas sp. (strain JS666 / ATCC BAA-500)).